The sequence spans 247 residues: Myelin-oligodendrocyte glycoprotein (247 aa).

The first 29 residues, 1–29 (MASLSRPSLPSCLCSFLLLLLLQVSSSYA), serve as a signal peptide directing secretion. At 30-154 (GQFRVIGPRH…EDPFYWVSPG (125 aa)) the chain is on the extracellular side. The region spanning 32-145 (FRVIGPRHPI…EEAAMELKVE (114 aa)) is the Ig-like V-type domain. Residues Cys-53 and Cys-127 are joined by a disulfide bond. A glycan (N-linked (GlcNAc...) asparagine) is linked at Asn-60. Residues 155-175 (VLVLLAVLPVLLLQITVGLIF) traverse the membrane as a helical segment. Topologically, residues 176-210 (LCLQYRLRGKLRAEIENLHRTFDPHFLRVPCWKIT) are cytoplasmic. A helical transmembrane segment spans residues 211 to 231 (LFVIVPVLGPLVALIICYNWL). Over 232–247 (HRRLAGQFLEELRNPF) the chain is Extracellular.

This sequence belongs to the immunoglobulin superfamily. BTN/MOG family. As to quaternary structure, homodimer. May form heterodimers between the different isoforms. In terms of assembly, (Microbial infection) Interacts with rubella virus E2 glycoprotein. As to expression, found exclusively in the CNS, where it is localized on the surface of myelin and oligodendrocyte cytoplasmic membranes.

The protein resides in the cell membrane. Functionally, mediates homophilic cell-cell adhesion. Minor component of the myelin sheath. May be involved in completion and/or maintenance of the myelin sheath and in cell-cell communication. In terms of biological role, (Microbial infection) Acts as a receptor for rubella virus. The polypeptide is Myelin-oligodendrocyte glycoprotein (MOG) (Homo sapiens (Human)).